Here is a 28-residue protein sequence, read N- to C-terminus: Venom protein (28 aa).

Residues 1 to 28 (KEGYPDGQNGKKIPCAINDNISKTXEQA) are disordered. Over residues 19–28 (DNISKTXEQA) the composition is skewed to polar residues.

In terms of tissue distribution, expressed by the venom gland.

The protein localises to the secreted. Causes symptoms of mild intoxication and transient paralysis in insects (A.domestica). This is Venom protein from Rhopalurus junceus (Caribbean blue scorpion).